Consider the following 338-residue polypeptide: Methionine import ATP-binding protein MetN 2 (338 aa).

The ABC transporter domain occupies 2–242 (IQLEGVSVDF…PQHAFTRQLV (241 aa)). 39–46 (GTSGAGKS) contacts ATP.

Belongs to the ABC transporter superfamily. Methionine importer (TC 3.A.1.24) family. The complex is composed of two ATP-binding proteins (MetN), two transmembrane proteins (MetI) and a solute-binding protein (MetQ).

The protein resides in the cell inner membrane. It carries out the reaction L-methionine(out) + ATP + H2O = L-methionine(in) + ADP + phosphate + H(+). It catalyses the reaction D-methionine(out) + ATP + H2O = D-methionine(in) + ADP + phosphate + H(+). Part of the ABC transporter complex MetNIQ involved in methionine import. Responsible for energy coupling to the transport system. This is Methionine import ATP-binding protein MetN 2 from Pectobacterium atrosepticum (strain SCRI 1043 / ATCC BAA-672) (Erwinia carotovora subsp. atroseptica).